The following is an 869-amino-acid chain: Sodium-dependent phosphate transporter (869 aa).

The Extracellular portion of the chain corresponds to 1–18; it reads MEAVAELSAPSLAGAPGE. The helical transmembrane segment at 19–39 threads the bilayer; the sequence is YTWIVAVAGVTCFLTAFAIGA. Residues 40-54 are Cytoplasmic-facing; sequence NDVANTFSSSVGSRA. The helical transmembrane segment at 55 to 75 threads the bilayer; it reads IPLWAAIGMSAVLETVGATLL. Topologically, residues 76–97 are extracellular; the sequence is GGAVTDSIRSKIIDFEVFRETP. The helical transmembrane segment at 98–118 threads the bilayer; it reads SILMTGMLCALVGAGLWLFLA. The Cytoplasmic portion of the chain corresponds to 119 to 120; sequence NH. A helical transmembrane segment spans residues 121–141; the sequence is LGLPVSTTHSIIGALLGFGLA. The Extracellular portion of the chain corresponds to 142–154; it reads SGNVRAVKWTQVA. A helical transmembrane segment spans residues 155–175; that stretch reads FIVGSWVAAPLAASAAGATIF. The Cytoplasmic portion of the chain corresponds to 176–196; that stretch reads VCMRRLILRSRQPLRRAKRFL. A helical membrane pass occupies residues 197-217; it reads WIFIYLITLTFSVFLVFKNFF. At 218 to 250 the chain is on the extracellular side; that stretch reads ELNVSCDQMVAGGRVEHFEPCRISRWADAHSGT. Residues 251 to 271 form a helical membrane-spanning segment; that stretch reads ALGIAVALSVALTFVISCLVY. Over 272-720 the chain is Cytoplasmic; the sequence is RFAFYRVESY…SGSADSEIGS (449 aa). Disordered stretches follow at residues 286–312, 374–401, and 453–571; these read KRSS…GGLL, AAAA…GSSV, and SAFL…KRER. The segment covering 457–481 has biased composition (low complexity); sequence SSPSSSVPPSSPSPSSTPSSPSASP. The span at 482 to 491 shows a compositional bias: pro residues; the sequence is RRPPSRPPVP. Residues 492–509 show a composition bias toward low complexity; it reads RTCSPAPVSPSVPRAFAS. Residues 556–571 are compositionally biased toward basic and acidic residues; the sequence is PHPERRDEVPAAKRER. The helical transmembrane segment at 721-741 threads the bilayer; sequence PWYILLFGGLSMSLGLALLGY. Topologically, residues 742–759 are extracellular; it reads RVIKTVGVKLVKITPARG. The helical transmembrane segment at 760–780 threads the bilayer; sequence FSMELGAAWTVLIFSAIGIPL. The Cytoplasmic portion of the chain corresponds to 781-837; that stretch reads STTHCAVGSTVGVGLMEPKHPRRETGDGPVAEGEEPKKRAVQCPVINTASVNWKLFG. A helical transmembrane segment spans residues 838-858; that stretch reads GVFVSWIITIAFSALVTAALF. Residues 859–869 are Extracellular-facing; sequence SFAAYSPRMVS.

The protein belongs to the inorganic phosphate transporter (PiT) (TC 2.A.20) family.

It localises to the cell membrane. Its subcellular location is the vacuole membrane. The protein localises to the cytoplasmic vesicle membrane. It catalyses the reaction 2 Na(+)(out) + phosphate(out) = 2 Na(+)(in) + phosphate(in). Functionally, sodium-phosphate symporter which preferentially transports the monovalent form of phosphate with a stoichiometry of two sodium ions per phosphate ion. Plays a role in stabilizing the cytosolic pH and osmoregulation. May be required for optimal virulence of parasites in vivo. The polypeptide is Sodium-dependent phosphate transporter (Toxoplasma gondii (strain ATCC 50861 / VEG)).